The sequence spans 121 residues: Estrogen receptor (121 aa).

The region spanning 1–121 (LFAPNLLLDR…IRHMSNKGME (121 aa)) is the NR LBD domain. Residue Cys45 is the site of S-palmitoyl cysteine attachment.

It belongs to the nuclear hormone receptor family. NR3 subfamily. As to quaternary structure, binds DNA as a homodimer. Can form a heterodimer with ESR2. Interacts with coactivator NCOA5. Interacts with NCOA7; the interaction is ligand-inducible. Interacts with AKAP13, CUEDC2, HEXIM1, KDM5A, MAP1S, PELP1, SMARD1, and UBE1C. Interacts with MUC1; the interaction is stimulated by 7 beta-estradiol (E2) and enhances ERS1-mediated transcription. Interacts with DNTTIP2, and UIMC1. Interacts with KMT2D/MLL2. Interacts with ATAD2; the interaction is enhanced by estradiol. Interacts with KIF18A and LDB1. Interacts with RLIM (via its C-terminus). Interacts with MACROD1. Interacts with SH2D4A and PLCG. Interacts with SH2D4A; the interaction blocks binding to PLCG and inhibits estrogen-induced cell proliferation. Interacts with DYNLL1. Interacts with CCDC62; the interaction requires estradiol and appears to enhance the transcription of target genes. Interacts with NR2C1; the interaction prevents homodimerization of ESR1 and suppresses its transcriptional activity and cell growth. Interacts with DNAAF4. Interacts with PRMT2. Interacts with PI3KR1 or PIK3R2, SRC and PTK2/FAK1. Interacts with RBFOX2. Interacts with EP300; the interaction is estrogen-dependent and enhanced by CITED1. Interacts with CITED1; the interaction is estrogen-dependent. Interacts with FAM120B, FOXL2, PHB2 and SLC30A9. Interacts with coactivators NCOA3 and NCOA6. Interacts with STK3/MST2 only in the presence of SAV1 and vice-versa. Binds to CSNK1D. Interacts with NCOA2; NCOA2 can interact with ESR1 AF-1 and AF-2 domains simultaneously and mediate their transcriptional synergy. Interacts with DDX5. Interacts with NCOA1; the interaction seems to require a self-association of N-terminal and C-terminal regions. Interacts with ZNF366, DDX17, NFKB1, RELA, SP1 and SP3. Interacts with NRIP1. Interacts with GPER1; the interaction occurs in an estrogen-dependent manner. Interacts with CLOCK and the interaction is stimulated by estrogen. Interacts with TRIP4 (ufmylated); estrogen dependent. Interacts with LMTK3; the interaction phosphorylates ESR1 (in vitro) and protects it against proteasomal degradation. Interacts with CCAR2 (via N-terminus) in a ligand-independent manner. Interacts with ZFHX3. Interacts with SFR1 in a ligand-dependent and -independent manner. Interacts with DCAF13, LATS1 and DCAF1; regulates ESR1 ubiquitination and ubiquitin-mediated proteasomal degradation. Interacts (via DNA-binding domain) with POU4F2 (C-terminus); this interaction increases the estrogen receptor ESR1 transcriptional activity in a DNA- and ligand 17-beta-estradiol-independent manner. Interacts with ESRRB isoform 1. Interacts with UBE3A and WBP2. Interacts with GTF2B. Interacts with RBM39. In the absence of hormonal ligand, interacts with TACC1. Interacts with BAG1; the interaction is promoted in the absence of estradiol (17-beta-estradiol/E2). Interacts with and ubiquitinated by STUB1; the interaction is promoted in the absence of estradiol (17-beta-estradiol/E2). Interacts with NEDD8. Post-translationally, ubiquitinated; regulated by LATS1 via DCAF1 it leads to ESR1 proteasomal degradation. Deubiquitinated by OTUB1. Ubiquitinated by STUB1/CHIP; in the CA1 hippocampal region following loss of endogenous circulating estradiol (17-beta-estradiol/E2). Ubiquitinated by UBR5, leading to its degradation: UBR5 specifically recognizes and binds ligand-bound ESR1 when it is not associated with coactivators (NCOAs). In presence of NCOAs, the UBR5-degron is not accessible, preventing its ubiquitination and degradation. Palmitoylated at Cys-45 by ZDHHC7 and ZDHHC21. Palmitoylation is required for plasma membrane targeting and for rapid intracellular signaling via ERK and AKT kinases and cAMP generation, but not for signaling mediated by the nuclear hormone receptor. In terms of processing, phosphorylated by cyclin A/CDK2 and CK1. Phosphorylation probably enhances transcriptional activity. Dephosphorylation by PPP5C inhibits its transactivation activity. Phosphorylated by LMTK3 (in vitro). Post-translationally, dimethylated by PRMT1. Demethylated by JMJD6.

The protein localises to the nucleus. It localises to the cytoplasm. The protein resides in the golgi apparatus. It is found in the cell membrane. Functionally, nuclear hormone receptor. The steroid hormones and their receptors are involved in the regulation of eukaryotic gene expression and affect cellular proliferation and differentiation in target tissues. Ligand-dependent nuclear transactivation involves either direct homodimer binding to a palindromic estrogen response element (ERE) sequence or association with other DNA-binding transcription factors, such as AP-1/c-Jun, c-Fos, ATF-2, Sp1 and Sp3, to mediate ERE-independent signaling. Ligand binding induces a conformational change allowing subsequent or combinatorial association with multiprotein coactivator complexes through LXXLL motifs of their respective components. Mutual transrepression occurs between the estrogen receptor (ER) and NF-kappa-B in a cell-type specific manner. Decreases NF-kappa-B DNA-binding activity and inhibits NF-kappa-B-mediated transcription from the IL6 promoter and displace RELA/p65 and associated coregulators from the promoter. Recruited to the NF-kappa-B response element of the CCL2 and IL8 promoters and can displace CREBBP. Present with NF-kappa-B components RELA/p65 and NFKB1/p50 on ERE sequences. Can also act synergistically with NF-kappa-B to activate transcription involving respective recruitment adjacent response elements; the function involves CREBBP. Can activate the transcriptional activity of TFF1. Also mediates membrane-initiated estrogen signaling involving various kinase cascades. Essential for MTA1-mediated transcriptional regulation of BRCA1 and BCAS3. Maintains neuronal survival in response to ischemic reperfusion injury when in the presence of circulating estradiol (17-beta-estradiol/E2). The chain is Estrogen receptor (ESR1) from Macaca mulatta (Rhesus macaque).